Reading from the N-terminus, the 226-residue chain is Enolase-phosphatase E1 (226 aa).

Belongs to the HAD-like hydrolase superfamily. MasA/MtnC family. Monomer. The cofactor is Mg(2+).

It carries out the reaction 5-methylsulfanyl-2,3-dioxopentyl phosphate + H2O = 1,2-dihydroxy-5-(methylsulfanyl)pent-1-en-3-one + phosphate. The protein operates within amino-acid biosynthesis; L-methionine biosynthesis via salvage pathway; L-methionine from S-methyl-5-thio-alpha-D-ribose 1-phosphate: step 3/6. It functions in the pathway amino-acid biosynthesis; L-methionine biosynthesis via salvage pathway; L-methionine from S-methyl-5-thio-alpha-D-ribose 1-phosphate: step 4/6. Its function is as follows. Bifunctional enzyme that catalyzes the enolization of 2,3-diketo-5-methylthiopentyl-1-phosphate (DK-MTP-1-P) into the intermediate 2-hydroxy-3-keto-5-methylthiopentenyl-1-phosphate (HK-MTPenyl-1-P), which is then dephosphorylated to form the acireductone 1,2-dihydroxy-3-keto-5-methylthiopentene (DHK-MTPene). The sequence is that of Enolase-phosphatase E1 from Shewanella sp. (strain ANA-3).